The following is a 210-amino-acid chain: Large ribosomal subunit protein uL3 (210 aa).

Positions 120–143 (FQGNIKKDGQSRGPMGHGSRYHRR) are disordered.

It belongs to the universal ribosomal protein uL3 family. As to quaternary structure, part of the 50S ribosomal subunit. Forms a cluster with proteins L14 and L19.

In terms of biological role, one of the primary rRNA binding proteins, it binds directly near the 3'-end of the 23S rRNA, where it nucleates assembly of the 50S subunit. In Latilactobacillus sakei subsp. sakei (strain 23K) (Lactobacillus sakei subsp. sakei), this protein is Large ribosomal subunit protein uL3.